Reading from the N-terminus, the 263-residue chain is Single-stranded DNA-binding protein WHY1, chloroplastic (263 aa).

The transit peptide at 1 to 47 (MSQLLSTPLMAVNSNPRFLSSSSVLVTGGFAVKRHGFALKPTTKTVK) directs the protein to the chloroplast. A required for ssDNA binding region spans residues 89 to 94 (KGKAAL). A Nuclear localization signal motif is present at residues 167–180 (KGKSDEGKVRKVLK).

Belongs to the Whirly family. Homotetramer.

The protein resides in the plastid. It localises to the chloroplast. It is found in the nucleus. Functionally, single-stranded DNA-binding protein that functions in both chloroplasts and nucleus. In chloroplasts, maintains plastid genome stability by preventing break-induced and short homology-dependent illegitimate recombinations. In nucleus, modulates telomere length homeostasis by inhibiting the action of the telomerase at the extreme termini of chromosomes. Is recruited to a distal element upstream of the kinesin KP1 to mediate the transcriptional repression of KP1. Is required for full salicylic acid-dependent plant disease resistance responses. Can bind double-stranded DNA in vivo. This chain is Single-stranded DNA-binding protein WHY1, chloroplastic (WHY1), found in Arabidopsis thaliana (Mouse-ear cress).